We begin with the raw amino-acid sequence, 326 residues long: MTVCSSRLAGFGHAVPDRRVENAEIEAQLGLETGWIERRTGIRCRRWAMPDETLSHLAASAADMALSDAGIERSDIALTLLATSTPDHLLPPTAPLLTHWLNLQNSGAADLAGACTGFLYALVLADGFVRAQGKPVLVVAANLLSRRINMAERASAVLFGDAAGAVVLAPSAKANSFQSQFITNGSHYDLIKVPAGGSARAYAPERDASEFLMTMQDGRAVFTEAVRIMSGASQNVLASAAMLPQAIDRFFPHQANIRIVDKVCETIGVPRAKAASTLETYGNSSAATIPLSLSLANLEQPLREGERLLFAAAGAGMTGGAVLMQV.

Residues Cys-115 and His-253 contribute to the active site. The ACP-binding stretch occupies residues 254–258 (QANIR). Asn-283 is a catalytic residue.

The protein belongs to the thiolase-like superfamily. BioZ family.

It catalyses the reaction malonyl-[ACP] + an acyl-CoA + H(+) = a 3-oxoacyl-[ACP] + CO2 + CoA. It carries out the reaction glutaryl-CoA + malonyl-[ACP] + H(+) = 3-oxo-6-carboxyhexanoyl-[ACP] + CO2 + CoA. The protein operates within cofactor biosynthesis; biotin biosynthesis. Functionally, involved in the formation of the biotin precursor pimeloyl-ACP. Catalyzes the condensation of glutaryl-CoA, an intermediate in lysine degradation, with malonyl-ACP to produce 3-oxopimeloyl-ACP. The protein is 3-oxopimeloyl-[acyl-carrier-protein] synthase of Brucella abortus (strain 2308).